A 298-amino-acid polypeptide reads, in one-letter code: ATP synthase gamma chain (298 aa).

Belongs to the ATPase gamma chain family. In terms of assembly, F-type ATPases have 2 components, CF(1) - the catalytic core - and CF(0) - the membrane proton channel. CF(1) has five subunits: alpha(3), beta(3), gamma(1), delta(1), epsilon(1). CF(0) has three main subunits: a, b and c.

It localises to the cell inner membrane. Functionally, produces ATP from ADP in the presence of a proton gradient across the membrane. The gamma chain is believed to be important in regulating ATPase activity and the flow of protons through the CF(0) complex. The chain is ATP synthase gamma chain from Granulibacter bethesdensis (strain ATCC BAA-1260 / CGDNIH1).